The sequence spans 295 residues: Sulfotransferase 1A1 (295 aa).

48–53 (KSGTTW) lines the 3'-phosphoadenylyl sulfate pocket. 106-108 (KTH) contributes to the substrate binding site. Residue histidine 108 is the Proton acceptor of the active site. 3'-phosphoadenylyl sulfate contacts are provided by residues arginine 130, serine 138, tyrosine 193, 227–232 (TSFKEM), and 255–259 (FMRKG). Serine 138 bears the Phosphoserine mark.

This sequence belongs to the sulfotransferase 1 family. As to quaternary structure, homodimer. Ubiquitously expressed in canine tissues with highest expression in male and female liver.

It is found in the cytoplasm. The catalysed reaction is a phenol + 3'-phosphoadenylyl sulfate = an aryl sulfate + adenosine 3',5'-bisphosphate + H(+). It catalyses the reaction 17beta-estradiol + 3'-phosphoadenylyl sulfate = 17beta-estradiol 3-sulfate + adenosine 3',5'-bisphosphate + H(+). The enzyme catalyses 4-ethylphenol + 3'-phosphoadenylyl sulfate = 4-ethylphenyl sulfate + adenosine 3',5'-bisphosphate + H(+). It carries out the reaction 4-nitrophenol + 3'-phosphoadenylyl sulfate = 4-nitrophenyl sulfate + adenosine 3',5'-bisphosphate. The catalysed reaction is dopamine + 3'-phosphoadenylyl sulfate = dopamine 3-O-sulfate + adenosine 3',5'-bisphosphate + H(+). It catalyses the reaction dopamine + 3'-phosphoadenylyl sulfate = dopamine 4-O-sulfate + adenosine 3',5'-bisphosphate + H(+). The enzyme catalyses 3,3',5-triiodo-L-thyronine + 3'-phosphoadenylyl sulfate = 3,3',5-triiodo-L-thyronine sulfate + adenosine 3',5'-bisphosphate + H(+). It carries out the reaction 3,3',5'-triiodo-L-thyronine + 3'-phosphoadenylyl sulfate = 3,3',5'-triiodo-L-thyronine sulfate + adenosine 3',5'-bisphosphate + H(+). The catalysed reaction is 3,3'-diiodo-L-thyronine + 3'-phosphoadenylyl sulfate = 3,3'-diiodo-L-thyronine sulfate + adenosine 3',5'-bisphosphate + H(+). It catalyses the reaction L-thyroxine + 3'-phosphoadenylyl sulfate = L-thyroxine sulfate + adenosine 3',5'-bisphosphate + H(+). Its function is as follows. Sulfotransferase that utilizes 3'-phospho-5'-adenylyl sulfate (PAPS) as sulfonate donor to catalyze the sulfate conjugation of a wide variety of acceptor molecules bearing a hydroxyl or an amine group. Sulfonation increases the water solubility of most compounds, and therefore their renal excretion, but it can also result in bioactivation to form active metabolites. Displays broad substrate specificity for small phenolic compounds. Plays an important role in the sulfonation of endogenous molecules such as steroid hormones. Mediates also the metabolic activation of carcinogenic N-hydroxyarylamines leading to highly reactive intermediates capable of forming DNA adducts, potentially resulting in mutagenesis. May play a role in gut microbiota-host metabolic interaction. O-sulfonates 4-ethylphenol (4-EP), a dietary tyrosine-derived metabolite produced by gut bacteria. The product 4-EPS crosses the blood-brain barrier and may negatively regulate oligodendrocyte maturation and myelination, affecting the functional connectivity of different brain regions associated with the limbic system. Catalyzes the sulfate conjugation of dopamine. Catalyzes the sulfation of T4 (L-thyroxine/3,5,3',5'-tetraiodothyronine), T3 (3,5,3'-triiodothyronine), rT3 (3,3',5'-triiodothyronine) and 3,3'-T2 (3,3'-diiodothyronine), with a substrate preference of 3,3'-T2 &gt; rT3 &gt; T3 &gt; T4. The protein is Sulfotransferase 1A1 (SULT1A1) of Canis lupus familiaris (Dog).